Consider the following 353-residue polypeptide: Quinolinate synthase (353 aa).

Positions 47 and 68 each coordinate iminosuccinate. A [4Fe-4S] cluster-binding site is contributed by C113. Iminosuccinate contacts are provided by residues 139–141 and S156; that span reads YAN. C200 is a [4Fe-4S] cluster binding site. Residues 226–228 and T243 contribute to the iminosuccinate site; that span reads HPE. C297 is a [4Fe-4S] cluster binding site.

The protein belongs to the quinolinate synthase family. Type 1 subfamily. [4Fe-4S] cluster is required as a cofactor.

It localises to the cytoplasm. It carries out the reaction iminosuccinate + dihydroxyacetone phosphate = quinolinate + phosphate + 2 H2O + H(+). Its pathway is cofactor biosynthesis; NAD(+) biosynthesis; quinolinate from iminoaspartate: step 1/1. Its function is as follows. Catalyzes the condensation of iminoaspartate with dihydroxyacetone phosphate to form quinolinate. This chain is Quinolinate synthase, found in Vibrio vulnificus (strain CMCP6).